The primary structure comprises 160 residues: Putative 4-hydroxy-4-methyl-2-oxoglutarate aldolase (160 aa).

Substrate contacts are provided by residues 75 to 78 (GDLI) and Arg97. Asp98 provides a ligand contact to a divalent metal cation.

It belongs to the class II aldolase/RraA-like family. As to quaternary structure, homotrimer. A divalent metal cation serves as cofactor.

It catalyses the reaction 4-hydroxy-4-methyl-2-oxoglutarate = 2 pyruvate. The enzyme catalyses oxaloacetate + H(+) = pyruvate + CO2. Its function is as follows. Catalyzes the aldol cleavage of 4-hydroxy-4-methyl-2-oxoglutarate (HMG) into 2 molecules of pyruvate. Also contains a secondary oxaloacetate (OAA) decarboxylase activity due to the common pyruvate enolate transition state formed following C-C bond cleavage in the retro-aldol and decarboxylation reactions. This chain is Putative 4-hydroxy-4-methyl-2-oxoglutarate aldolase, found in Rhodospirillum centenum (strain ATCC 51521 / SW).